The sequence spans 421 residues: Glutamyl-tRNA reductase (421 aa).

Substrate is bound by residues 49–52 (TCNR), Ser-109, 114–116 (EPQ), and Gln-120. The active-site Nucleophile is Cys-50. 189-194 (GAGKMS) is a binding site for NADP(+).

Belongs to the glutamyl-tRNA reductase family. Homodimer.

It catalyses the reaction (S)-4-amino-5-oxopentanoate + tRNA(Glu) + NADP(+) = L-glutamyl-tRNA(Glu) + NADPH + H(+). It participates in porphyrin-containing compound metabolism; protoporphyrin-IX biosynthesis; 5-aminolevulinate from L-glutamyl-tRNA(Glu): step 1/2. Functionally, catalyzes the NADPH-dependent reduction of glutamyl-tRNA(Glu) to glutamate 1-semialdehyde (GSA). The sequence is that of Glutamyl-tRNA reductase from Solibacter usitatus (strain Ellin6076).